The primary structure comprises 230 residues: MHTKVLQQGLWALLLWPHLFTVSVPLDCRDDQASLARCPSISQEKLLDRVIHHAELIYRVSEESCSLFEEMFIPLPLRLQSNQGGYACITKALPIPSSKSEIQQLSDKWLLHSVLMLVQSWIEPLVYLQMTLDRYDHAPDMLLNKTKWVSEKLISLEQGVVVLIKKMLDEGAMTTTYSEQGAFQYDVQLEMLEYVMRDYTLLTCLKKDAHKMETFLKLLKCRQTDKYNCA.

The N-terminal stretch at 1–25 (MHTKVLQQGLWALLLWPHLFTVSVP) is a signal peptide. 3 disulfide bridges follow: Cys-28/Cys-38, Cys-88/Cys-204, and Cys-221/Cys-229. Asn-144 carries N-linked (GlcNAc...) asparagine glycosylation.

It belongs to the somatotropin/prolactin family.

Its subcellular location is the secreted. Its function is as follows. Selectively regulates proliferation and morphogenesis of neural-crest derived pigment cells. The polypeptide is Somatolactin (Oryzias latipes (Japanese rice fish)).